Reading from the N-terminus, the 161-residue chain is Lipoprotein signal peptidase (161 aa).

4 consecutive transmembrane segments (helical) span residues 11 to 31, 44 to 64, 66 to 86, and 100 to 120; these read PLFW…KLWV, LWSG…FSAF, GGAG…IIFA, and GCIL…GHVI. Residues D121 and D137 contribute to the active site. A helical membrane pass occupies residues 135-155; the sequence is LADVSINIGIAALLWASFFPV.

Belongs to the peptidase A8 family.

It localises to the cell inner membrane. It carries out the reaction Release of signal peptides from bacterial membrane prolipoproteins. Hydrolyzes -Xaa-Yaa-Zaa-|-(S,diacylglyceryl)Cys-, in which Xaa is hydrophobic (preferably Leu), and Yaa (Ala or Ser) and Zaa (Gly or Ala) have small, neutral side chains.. It participates in protein modification; lipoprotein biosynthesis (signal peptide cleavage). In terms of biological role, this protein specifically catalyzes the removal of signal peptides from prolipoproteins. This Synechocystis sp. (strain ATCC 27184 / PCC 6803 / Kazusa) protein is Lipoprotein signal peptidase.